Reading from the N-terminus, the 894-residue chain is RNA polymerase I-specific transcription initiation factor RRN6 (894 aa).

The segment at 803–894 (PPFNLNSQSQ…KKKKRIRGFG (92 aa)) is disordered. Polar residues-rich tracts occupy residues 806–823 (NLNS…QSSG), 832–849 (KTQS…QNLS), and 863–880 (QPPS…PRNS). Basic residues predominate over residues 881–894 (QKAKKKKKRIRGFG).

As to quaternary structure, component of the core factor (CF) complex, which consists of RRN6, RRN7 and RRN11. The CF heterotrimer may further dimerize to form a hexamer. RRN6 interacts with RRN7, RRN11 and RRN9.

It is found in the cytoplasm. Its subcellular location is the nucleus. The protein resides in the nucleolus. Acts as a component of the core factor (CF) complex which is essential for the initiation of rDNA transcription by RNA polymerase I. After binding of UAF (upstream activation factor) to an upstream element of the promoter, CF is recruited in a SPT15/TBP-dependent manner to form a preinitiation complex. This Saccharomyces cerevisiae (strain ATCC 204508 / S288c) (Baker's yeast) protein is RNA polymerase I-specific transcription initiation factor RRN6 (RRN6).